Consider the following 498-residue polypeptide: Protein MGF 505-5R (498 aa).

This sequence belongs to the asfivirus MGF 505 family.

Functionally, plays a role in virus cell tropism, and may be required for efficient virus replication in macrophages. The polypeptide is Protein MGF 505-5R (Ornithodoros (relapsing fever ticks)).